A 422-amino-acid polypeptide reads, in one-letter code: Enolase 2 (422 aa).

Q162 serves as a coordination point for (2R)-2-phosphoglycerate. The Proton donor role is filled by E204. D241, E285, and D312 together coordinate Mg(2+). Residues K337, R366, S367, and K388 each coordinate (2R)-2-phosphoglycerate. The active-site Proton acceptor is K337.

This sequence belongs to the enolase family. Mg(2+) serves as cofactor.

Its subcellular location is the cytoplasm. The protein localises to the secreted. It localises to the cell surface. It carries out the reaction (2R)-2-phosphoglycerate = phosphoenolpyruvate + H2O. Its pathway is carbohydrate degradation; glycolysis; pyruvate from D-glyceraldehyde 3-phosphate: step 4/5. In terms of biological role, catalyzes the reversible conversion of 2-phosphoglycerate (2-PG) into phosphoenolpyruvate (PEP). It is essential for the degradation of carbohydrates via glycolysis. The sequence is that of Enolase 2 from Lactococcus lactis subsp. lactis (strain IL1403) (Streptococcus lactis).